An 80-amino-acid chain; its full sequence is Translation initiation factor IF-1 (80 aa).

Residues 6-80 (EKKKKDESDS…TSRGRIVYRR (75 aa)) enclose the S1-like domain.

The protein belongs to the IF-1 family. Component of the 30S ribosomal translation pre-initiation complex which assembles on the 30S ribosome in the order IF-2 and IF-3, IF-1 and N-formylmethionyl-tRNA(fMet); mRNA recruitment can occur at any time during PIC assembly.

Its subcellular location is the cytoplasm. One of the essential components for the initiation of protein synthesis. Stabilizes the binding of IF-2 and IF-3 on the 30S subunit to which N-formylmethionyl-tRNA(fMet) subsequently binds. Helps modulate mRNA selection, yielding the 30S pre-initiation complex (PIC). Upon addition of the 50S ribosomal subunit IF-1, IF-2 and IF-3 are released leaving the mature 70S translation initiation complex. The sequence is that of Translation initiation factor IF-1 from Deinococcus radiodurans (strain ATCC 13939 / DSM 20539 / JCM 16871 / CCUG 27074 / LMG 4051 / NBRC 15346 / NCIMB 9279 / VKM B-1422 / R1).